The sequence spans 215 residues: UPF0502 protein PSEEN2299 (215 aa).

This sequence belongs to the UPF0502 family.

The polypeptide is UPF0502 protein PSEEN2299 (Pseudomonas entomophila (strain L48)).